A 563-amino-acid chain; its full sequence is Rhotekin (563 aa).

R14 bears the Omega-N-methylarginine mark. In terms of domain architecture, REM-1 spans 17–98 (ALEMEFKRGR…LQRRKEAQVL (82 aa)). A phosphoserine mark is found at S30 and S106. The interval 96–116 (QVLGKTSRRPSDSGPPAERSP) is disordered. An Asymmetric dimethylarginine modification is found at R230. S232 is modified (phosphoserine). A PH domain is found at 309–416 (QPTASGTLRV…WMEALWQLFF (108 aa)). A disordered region spans residues 518-563 (TFSLDAVPPDHSPRARSVAPLPPQRSPRTRGLCSKGQPRTWLQSPV). Phosphoserine is present on residues S520, S529, and S543.

Interacts via its C-terminal region with the TAX1BP3 PDZ domain. This interaction facilitates Rho-mediated activation of the c-Fos serum response element (SRE). Interacts with SEPT9. Specifically binds to GTP-bound RHOA, RHOB and RHOC and inhibits their GTPase activity. Highly expressed in prostate, moderately in kidney, heart, brain, spleen, testis, placenta, small intestine, pancreas, skeletal muscle and peripheral blood leukocytes, and weakly in ovary, colon and thymus. Weakly expressed in all normal cell lines tested. Overexpressed in various cancer cell lines.

Mediates Rho signaling to activate NF-kappa-B and may confer increased resistance to apoptosis to cells in gastric tumorigenesis. May play a novel role in the organization of septin structures. The chain is Rhotekin from Homo sapiens (Human).